The chain runs to 262 residues: ATP synthase subunit a (262 aa).

5 helical membrane passes run 24 to 44 (AVHLDTLFFSLVAGVLFLVVF), 85 to 105 (IAPLALTIFCWVFIMNAIDLV), 129 to 149 (DISATLGMSICVFGLILFYTV), 194 to 214 (LFGNMYAGELIFILIAVMYMA), and 228 to 248 (LVWAIFHILVITLQAFIFMML).

Belongs to the ATPase A chain family. In terms of assembly, F-type ATPases have 2 components, CF(1) - the catalytic core - and CF(0) - the membrane proton channel. CF(1) has five subunits: alpha(3), beta(3), gamma(1), delta(1), epsilon(1). CF(0) has three main subunits: a(1), b(2) and c(9-12). The alpha and beta chains form an alternating ring which encloses part of the gamma chain. CF(1) is attached to CF(0) by a central stalk formed by the gamma and epsilon chains, while a peripheral stalk is formed by the delta and b chains.

It localises to the cell inner membrane. Functionally, key component of the proton channel; it plays a direct role in the translocation of protons across the membrane. The protein is ATP synthase subunit a of Haemophilus ducreyi (strain 35000HP / ATCC 700724).